Consider the following 299-residue polypeptide: ATP phosphoribosyltransferase (299 aa).

The protein belongs to the ATP phosphoribosyltransferase family. Long subfamily. As to quaternary structure, equilibrium between an active dimeric form, an inactive hexameric form and higher aggregates. Interconversion between the various forms is largely reversible and is influenced by the natural substrates and inhibitors of the enzyme. The cofactor is Mg(2+).

The protein resides in the cytoplasm. The enzyme catalyses 1-(5-phospho-beta-D-ribosyl)-ATP + diphosphate = 5-phospho-alpha-D-ribose 1-diphosphate + ATP. It functions in the pathway amino-acid biosynthesis; L-histidine biosynthesis; L-histidine from 5-phospho-alpha-D-ribose 1-diphosphate: step 1/9. With respect to regulation, feedback inhibited by histidine. Its function is as follows. Catalyzes the condensation of ATP and 5-phosphoribose 1-diphosphate to form N'-(5'-phosphoribosyl)-ATP (PR-ATP). Has a crucial role in the pathway because the rate of histidine biosynthesis seems to be controlled primarily by regulation of HisG enzymatic activity. The polypeptide is ATP phosphoribosyltransferase (Escherichia coli O8 (strain IAI1)).